The following is a 239-amino-acid chain: Tungstate uptake system permease protein TupB (239 aa).

One can recognise an ABC transmembrane type-1 domain in the interval 37–233; that stretch reads IKTTLLSSSI…LIAFCLNFIT (197 aa). 5 helical membrane passes run 45 to 65, 76 to 96, 114 to 134, 168 to 188, and 212 to 232; these read SISIVLALLIGFPLGFILGFF, IVDTSLSFPTVAVGLILYALI, LILGQFILALPIVIALFSNLI, ISVVALAYGRIVAEVGVAMIV, and FASGIALALVLILIAFCLNFI.

Belongs to the binding-protein-dependent transport system permease family. The complex is composed of two ATP-binding proteins (TupC), two transmembrane proteins (TupB) and a solute-binding protein (TupA).

The protein resides in the cell inner membrane. Part of an ABC transporter complex involved in ultra-high affinity tungstate uptake. Probably responsible for the translocation of the substrate across the membrane. This is Tungstate uptake system permease protein TupB from Campylobacter jejuni subsp. jejuni serotype O:2 (strain ATCC 700819 / NCTC 11168).